The chain runs to 64 residues: Toxin BmCa-1 (64 aa).

The N-terminal stretch at 1–18 (MNTFVVVFLLLTAILCHA) is a signal peptide. A propeptide spanning residues 19-27 (EHALDETAR) is cleaved from the precursor. 3 cysteine pairs are disulfide-bonded: cysteine 29–cysteine 43, cysteine 36–cysteine 49, and cysteine 42–cysteine 58.

The protein belongs to the scorpion calcin-like family. Expressed by the venom gland.

Its subcellular location is the secreted. Its function is as follows. May increase intracellular calcium release through the activation of nuclear inositol 1,4,5-trisphosphate receptors (ITPR) of cardiomyocytes, thereby causing an increase in the contraction frequency of these cells. This is Toxin BmCa-1 from Olivierus martensii (Manchurian scorpion).